The chain runs to 444 residues: Methionine aminopeptidase 2-1 (444 aa).

Residues 1-92 (MAAQVTEKLQ…VPVSNLFPNN (92 aa)) form a disordered region. Positions 15-29 (NGQNGDAKANSTAVG) are enriched in polar residues. Acidic residues predominate over residues 34–45 (GEAEDDSDDEKE). Basic residues predominate over residues 59-73 (AKKKKRKSKKKKKGG). H197 provides a ligand contact to substrate. 3 residues coordinate a divalent metal cation: D217, D228, and H297. A substrate-binding site is contributed by H305. A divalent metal cation is bound by residues E330 and E425.

It belongs to the peptidase M24A family. Methionine aminopeptidase eukaryotic type 2 subfamily. Co(2+) is required as a cofactor. The cofactor is Zn(2+). Mn(2+) serves as cofactor. Requires Fe(2+) as cofactor.

It is found in the cytoplasm. The catalysed reaction is Release of N-terminal amino acids, preferentially methionine, from peptides and arylamides.. Its function is as follows. Cotranslationally removes the N-terminal methionine from nascent proteins. The N-terminal methionine is often cleaved when the second residue in the primary sequence is small and uncharged (Met-Ala-, Cys, Gly, Pro, Ser, Thr, or Val). In Neosartorya fischeri (strain ATCC 1020 / DSM 3700 / CBS 544.65 / FGSC A1164 / JCM 1740 / NRRL 181 / WB 181) (Aspergillus fischerianus), this protein is Methionine aminopeptidase 2-1.